Reading from the N-terminus, the 100-residue chain is NADH-quinone oxidoreductase subunit K 2 (100 aa).

The next 3 helical transmembrane spans lie at 4–24 (LWWHISLGVALFVIGAAGVLL), 28–48 (ILVVLMSLELLLNSVNINFIA), and 60–80 (IFAIFVIAITAAEVAVALGIL).

Belongs to the complex I subunit 4L family. In terms of assembly, NDH-1 is composed of 14 different subunits. Subunits NuoA, H, J, K, L, M, N constitute the membrane sector of the complex.

The protein resides in the cell inner membrane. The enzyme catalyses a quinone + NADH + 5 H(+)(in) = a quinol + NAD(+) + 4 H(+)(out). NDH-1 shuttles electrons from NADH, via FMN and iron-sulfur (Fe-S) centers, to quinones in the respiratory chain. The immediate electron acceptor for the enzyme in this species is believed to be ubiquinone. Couples the redox reaction to proton translocation (for every two electrons transferred, four hydrogen ions are translocated across the cytoplasmic membrane), and thus conserves the redox energy in a proton gradient. The sequence is that of NADH-quinone oxidoreductase subunit K 2 from Sinorhizobium fredii (strain NBRC 101917 / NGR234).